A 116-amino-acid chain; its full sequence is Large ribosomal subunit protein uL18 (116 aa).

Belongs to the universal ribosomal protein uL18 family. In terms of assembly, part of the 50S ribosomal subunit; part of the 5S rRNA/L5/L18/L25 subcomplex. Contacts the 5S and 23S rRNAs.

This is one of the proteins that bind and probably mediate the attachment of the 5S RNA into the large ribosomal subunit, where it forms part of the central protuberance. The polypeptide is Large ribosomal subunit protein uL18 (Novosphingobium aromaticivorans (strain ATCC 700278 / DSM 12444 / CCUG 56034 / CIP 105152 / NBRC 16084 / F199)).